We begin with the raw amino-acid sequence, 230 residues long: 6-carboxyhexanoate--CoA ligase (230 aa).

It belongs to the BioW family. As to quaternary structure, homodimer. Mg(2+) serves as cofactor.

It catalyses the reaction heptanedioate + ATP + CoA = 6-carboxyhexanoyl-CoA + AMP + diphosphate. It participates in metabolic intermediate metabolism; pimeloyl-CoA biosynthesis; pimeloyl-CoA from pimelate: step 1/1. Its function is as follows. Catalyzes the transformation of pimelate into pimeloyl-CoA with concomitant hydrolysis of ATP to AMP. In Staphylococcus aureus (strain Mu3 / ATCC 700698), this protein is 6-carboxyhexanoate--CoA ligase.